Reading from the N-terminus, the 478-residue chain is Alpha-1,3-mannosyl-glycoprotein 4-beta-N-acetylglucosaminyltransferase C (478 aa).

The Cytoplasmic segment spans residues 1 to 25 (MLKFYQMKYIFQILDKMRCLRKRST). The helical; Signal-anchor for type II membrane protein transmembrane segment at 26–43 (VSFLGVLVVFLLFMNLYI) threads the bilayer. The Lumenal segment spans residues 44–478 (EDSYVLEGDK…IIRSISIWTS (435 aa)). N-linked (GlcNAc...) asparagine glycans are attached at residues asparagine 84 and asparagine 215.

Belongs to the glycosyltransferase 54 family. A divalent metal cation is required as a cofactor.

The protein localises to the golgi apparatus membrane. The enzyme catalyses N(4)-{beta-D-GlcNAc-(1-&gt;2)-alpha-D-Man-(1-&gt;3)-[beta-D-GlcNAc-(1-&gt;2)-alpha-D-Man-(1-&gt;6)]-beta-D-Man-(1-&gt;4)-beta-D-GlcNAc-(1-&gt;4)-beta-D-GlcNAc}-L-asparaginyl-[protein] + UDP-N-acetyl-alpha-D-glucosamine = N(4)-{beta-D-GlcNAc-(1-&gt;2)-[beta-D-GlcNAc-(1-&gt;4)]-alpha-D-Man-(1-&gt;3)-[beta-D-GlcNAc-(1-&gt;2)-alpha-D-Man-(1-&gt;6)]-beta-D-Man-(1-&gt;4)-beta-D-GlcNAc-(1-&gt;4)-beta-D-GlcNAc}-L-asparaginyl-[protein] + UDP + H(+). Its pathway is protein modification; protein glycosylation. Its function is as follows. Glycosyltransferase that participates in the transfer of N-acetylglucosamine (GlcNAc) to the core mannose residues of N-linked glycans. Catalyzes the formation of the GlcNAcbeta1-4 branch on the GlcNAcbeta1-2Manalpha1-3 arm of the core structure of N-linked glycans. Essential for the production of tri- and tetra-antennary N-linked sugar chains. Does not catalyze the transfer of GlcNAc to the Manalpha1-6 arm to form GlcNAcBeta1-4Manalpha1-6 linkage ('GnT-VI' activity). The chain is Alpha-1,3-mannosyl-glycoprotein 4-beta-N-acetylglucosaminyltransferase C (Mgat4c) from Mus musculus (Mouse).